Consider the following 1368-residue polypeptide: DNA-directed RNA polymerase subunit beta (1368 aa).

This sequence belongs to the RNA polymerase beta chain family. In terms of assembly, the RNAP catalytic core consists of 2 alpha, 1 beta, 1 beta' and 1 omega subunit. When a sigma factor is associated with the core the holoenzyme is formed, which can initiate transcription.

It catalyses the reaction RNA(n) + a ribonucleoside 5'-triphosphate = RNA(n+1) + diphosphate. Its function is as follows. DNA-dependent RNA polymerase catalyzes the transcription of DNA into RNA using the four ribonucleoside triphosphates as substrates. This chain is DNA-directed RNA polymerase subunit beta, found in Syntrophotalea carbinolica (strain DSM 2380 / NBRC 103641 / GraBd1) (Pelobacter carbinolicus).